Reading from the N-terminus, the 150-residue chain is D-aminoacyl-tRNA deacylase (150 aa).

Residues G133–P134 carry the Gly-cisPro motif, important for rejection of L-amino acids motif.

The protein belongs to the DTD family. Homodimer.

The protein localises to the cytoplasm. The catalysed reaction is glycyl-tRNA(Ala) + H2O = tRNA(Ala) + glycine + H(+). The enzyme catalyses a D-aminoacyl-tRNA + H2O = a tRNA + a D-alpha-amino acid + H(+). In terms of biological role, an aminoacyl-tRNA editing enzyme that deacylates mischarged D-aminoacyl-tRNAs. Also deacylates mischarged glycyl-tRNA(Ala), protecting cells against glycine mischarging by AlaRS. Acts via tRNA-based rather than protein-based catalysis; rejects L-amino acids rather than detecting D-amino acids in the active site. By recycling D-aminoacyl-tRNA to D-amino acids and free tRNA molecules, this enzyme counteracts the toxicity associated with the formation of D-aminoacyl-tRNA entities in vivo and helps enforce protein L-homochirality. This chain is D-aminoacyl-tRNA deacylase, found in Micrococcus luteus (strain ATCC 4698 / DSM 20030 / JCM 1464 / CCM 169 / CCUG 5858 / IAM 1056 / NBRC 3333 / NCIMB 9278 / NCTC 2665 / VKM Ac-2230) (Micrococcus lysodeikticus).